We begin with the raw amino-acid sequence, 399 residues long: Brefeldin A resistance protein (399 aa).

Basic and acidic residues-rich tracts occupy residues 1–31 (MTSKMENNKDESISTKNALEEKSNETKDETS), 49–69 (SKSEPLEDKGNAEVKEFKETT), and 101–130 (KVEEKELKVNKDVDENEGHVAVETGKKESA). Disordered regions lie at residues 1–173 (MTSK…FGAF) and 191–269 (KKFA…SEII). Low complexity predominate over residues 138 to 157 (SPFSQFASFSNASSPFSNVS). Basic and acidic residues-rich tracts occupy residues 205 to 217 (SGKEKENDKKSSE) and 241 to 252 (TKSEPKEADKGS). A compositionally biased stretch (polar residues) spans 253-263 (GDSTKSTMHQL). Positions 256-396 (TKSTMHQLSD…VLEAIPKGGR (141 aa)) constitute a RanBD1 domain.

Phosphorylated.

The protein localises to the nucleus. The polypeptide is Brefeldin A resistance protein (hba1) (Schizosaccharomyces pombe (strain 972 / ATCC 24843) (Fission yeast)).